Reading from the N-terminus, the 434-residue chain is Ataxin-10 homolog (434 aa).

The protein belongs to the ataxin-10 family.

It is found in the cytoplasm. The protein resides in the nucleus. Functionally, may play a role in the regulation of cytokinesis. The sequence is that of Ataxin-10 homolog (mug160) from Schizosaccharomyces pombe (strain 972 / ATCC 24843) (Fission yeast).